Here is a 606-residue protein sequence, read N- to C-terminus: Vacuolar calcium ion transporter (606 aa).

A disordered region spans residues 1–110; it reads MSPPRRVSFP…NSLDPNPGLM (110 aa). At 1 to 137 the chain is on the cytoplasmic side; that stretch reads MSPPRRVSFP…PTYWGSMKAA (137 aa). Residues 18–30 are compositionally biased toward low complexity; that stretch reads PPLADSPLSSPKL. Residues 36–56 show a composition bias toward polar residues; the sequence is QSSSTPIVSSNLPTDTTNSAS. Residues 138 to 158 form a helical membrane-spanning segment; the sequence is ITSTWLNVLLVFIPIGWALYL. The Vacuolar segment spans residues 159-170; the sequence is AKHNGGKDSISD. A helical membrane pass occupies residues 171–191; sequence TAVFCCTFIAIIPLAGLLGFA. Residues 192–204 are Cytoplasmic-facing; it reads TEEAALRLGQTLG. A helical membrane pass occupies residues 205–225; it reads GLLNATLGNAVELIVAILALI. Over 226-236 the chain is Vacuolar; sequence KCELQVVQSSL. Residues 237–257 traverse the membrane as a helical segment; sequence VGSILSNILLVLGMCFFAGGV. Topologically, residues 258 to 272 are cytoplasmic; it reads RFAEQAIKSTAAQLN. The chain crosses the membrane as a helical span at residues 273-293; the sequence is ASLLLIAVIAVLIPSAFHFSI. Residues 294 to 313 lie on the Vacuolar side of the membrane; that stretch reads SSSTSNTDASELANGEGADL. A helical membrane pass occupies residues 314–334; sequence LSMSHAVSILLLILYLGYLLF. Topologically, residues 335-437 are cytoplasmic; it reads QMWTHATYYV…EEEEETPQMN (103 aa). Residues 376–434 form a disordered region; that stretch reads DEEESYSTATTVSDAAVPPSARAEGGEVPATHGPGTAAAETGNRVEHEDAEEEEEEETP. Acidic residues predominate over residues 423–433; it reads EDAEEEEEEET. A helical membrane pass occupies residues 438-458; that stretch reads VVCTIALMVIDTVLVGVTAEF. Over 459-477 the chain is Vacuolar; that stretch reads LVDSINGMVESNPSLSAEW. The chain crosses the membrane as a helical span at residues 478–498; sequence VGLILLPIVGNAAEHFTAVSV. The Cytoplasmic portion of the chain corresponds to 499-505; sequence SVKDKLD. The chain crosses the membrane as a helical span at residues 506-526; it reads LSISVAVGSSIQIALFVIPVI. The Vacuolar portion of the chain corresponds to 527–535; sequence ELLAWTIGK. A helical membrane pass occupies residues 536–556; the sequence is PMTLLFDPYESIVLFLSVLIV. The Cytoplasmic portion of the chain corresponds to 557 to 566; the sequence is NQTLADGRSN. The helical transmembrane segment at 567-587 threads the bilayer; it reads WMEGMVLMMLYIIIAVSFWYY. Topologically, residues 588–606 are vacuolar; that stretch reads PGSTTATLLGCQDSSSVTG.

This sequence belongs to the Ca(2+):cation antiporter (CaCA) (TC 2.A.19) family.

The protein localises to the vacuole membrane. Its function is as follows. Has a role in promoting intracellular calcium ion sequestration via the exchange of calcium ions for hydrogen ions across the vacuolar membrane. The sequence is that of Vacuolar calcium ion transporter from Cryptococcus neoformans var. grubii serotype A (strain H99 / ATCC 208821 / CBS 10515 / FGSC 9487) (Filobasidiella neoformans var. grubii).